The sequence spans 361 residues: Porphobilinogen deaminase (361 aa).

S-(dipyrrolylmethanemethyl)cysteine is present on C265. The disordered stretch occupies residues 341-361; sequence LPPSSNTPTPQPITPITTNNS.

This sequence belongs to the HMBS family. Dipyrromethane is required as a cofactor.

The enzyme catalyses 4 porphobilinogen + H2O = hydroxymethylbilane + 4 NH4(+). It functions in the pathway porphyrin-containing compound metabolism; protoporphyrin-IX biosynthesis; coproporphyrinogen-III from 5-aminolevulinate: step 2/4. Its function is as follows. Tetrapolymerization of the monopyrrole PBG into the hydroxymethylbilane pre-uroporphyrinogen in several discrete steps. This is Porphobilinogen deaminase (HEM3) from Debaryomyces hansenii (strain ATCC 36239 / CBS 767 / BCRC 21394 / JCM 1990 / NBRC 0083 / IGC 2968) (Yeast).